Here is a 323-residue protein sequence, read N- to C-terminus: Melanocortin receptor 3 (323 aa).

Topologically, residues 1–37 (MNASCCLPSVQPTLPNGSEHLQAPFFSNQSSSAFCEQ) are extracellular. Residues Asn2, Asn16, and Asn28 are each glycosylated (N-linked (GlcNAc...) asparagine). A helical transmembrane segment spans residues 38 to 63 (VFIKPEVFLSLGIVSLLENILVILAV). Residues 64–75 (VRNGNLHSPMYF) lie on the Cytoplasmic side of the membrane. The chain crosses the membrane as a helical span at residues 76–100 (FLCSLAVADMLVSVSNALETIMIAI). Over 101-118 (VHSDYLTFEDQFIQHMDN) the chain is Extracellular. The chain crosses the membrane as a helical span at residues 119 to 140 (IFDSMICISLVASICNLLAIAV). Over 141-160 (DRYVTIFYALRYHSIMTVRK) the chain is Cytoplasmic. Residues 161 to 181 (ALTLIVAIWVCCGVCGVVFIV) traverse the membrane as a helical segment. Residues 182 to 186 (YSESK) lie on the Extracellular side of the membrane. The helical transmembrane segment at 187–210 (MVIVCLITMFFAMMLLMGTLYVHM) threads the bilayer. Residues 211 to 245 (FLFARLHVKRIAALPPADGVAPQQHSCMKGAVTIT) are Cytoplasmic-facing. Residues 246–268 (ILLGVFIFCWAPFFLHLVLIITC) form a helical membrane-spanning segment. Residues 269 to 277 (PTNPYCICY) lie on the Extracellular side of the membrane. The helical transmembrane segment at 278–301 (TAHFNTYLVLIMCNSVIDPLIYAF) threads the bilayer. At 302–323 (RSLELRNTFREILCGCNGMNLG) the chain is on the cytoplasmic side. The S-palmitoyl cysteine moiety is linked to residue Cys315.

It belongs to the G-protein coupled receptor 1 family. As to expression, brain, placental, and gut tissues.

It is found in the cell membrane. In terms of biological role, receptor for MSH (alpha, beta and gamma) and ACTH. This receptor is mediated by G proteins which activate adenylate cyclase. Required for expression of anticipatory patterns of activity and wakefulness during periods of limited nutrient availability and for the normal regulation of circadian clock activity in the brain. The polypeptide is Melanocortin receptor 3 (MC3R) (Homo sapiens (Human)).